The sequence spans 254 residues: Glucosamine-6-phosphate deaminase (254 aa).

Catalysis depends on D67, which acts as the Proton acceptor; for enolization step. The For ring-opening step role is filled by N136. H138 functions as the Proton acceptor; for ring-opening step in the catalytic mechanism. The active-site For ring-opening step is the E143.

Belongs to the glucosamine/galactosamine-6-phosphate isomerase family. NagB subfamily.

The enzyme catalyses alpha-D-glucosamine 6-phosphate + H2O = beta-D-fructose 6-phosphate + NH4(+). Its pathway is amino-sugar metabolism; N-acetylneuraminate degradation; D-fructose 6-phosphate from N-acetylneuraminate: step 5/5. In terms of biological role, catalyzes the reversible isomerization-deamination of glucosamine 6-phosphate (GlcN6P) to form fructose 6-phosphate (Fru6P) and ammonium ion. This chain is Glucosamine-6-phosphate deaminase, found in Brevibacillus brevis (strain 47 / JCM 6285 / NBRC 100599).